The following is a 190-amino-acid chain: LIM domain-containing protein WLIM1 (190 aa).

Alanine 2 bears the N-acetylalanine mark. The 61-residue stretch at 8–68 folds into the LIM zinc-binding 1 domain; it reads QKCMACDKTV…RPHFDQNFKR (61 aa). The disordered stretch occupies residues 74–98; the sequence is KSFEGTPKIGKPDRPLEGERPAGTK. Positions 83-95 are enriched in basic and acidic residues; that stretch reads GKPDRPLEGERPA. An LIM zinc-binding 2 domain is found at 108–168; that stretch reads EKCVGCDKTV…KHHHIQLIKE (61 aa).

Interacts with F-actin. In terms of tissue distribution, expressed in roots, leaves, stems, flowers and siliques. Not detected in pollen.

It localises to the cytoplasm. The protein localises to the cytoskeleton. Its function is as follows. Binds to actin filaments and promotes cross-linking into thick bundles. Has an actin-stabilizing activity. The actin regulatory activities are not regulated by pH and [Ca(2+)]. The polypeptide is LIM domain-containing protein WLIM1 (Arabidopsis thaliana (Mouse-ear cress)).